The sequence spans 231 residues: Ribosomal RNA small subunit methyltransferase G (231 aa).

Residues Gly-92, Leu-97, 143–144 (VE), and Arg-162 contribute to the S-adenosyl-L-methionine site.

The protein belongs to the methyltransferase superfamily. RNA methyltransferase RsmG family.

The protein resides in the cytoplasm. The enzyme catalyses guanosine(527) in 16S rRNA + S-adenosyl-L-methionine = N(7)-methylguanosine(527) in 16S rRNA + S-adenosyl-L-homocysteine. In terms of biological role, specifically methylates the N7 position of guanine in position 527 of 16S rRNA. This Burkholderia thailandensis (strain ATCC 700388 / DSM 13276 / CCUG 48851 / CIP 106301 / E264) protein is Ribosomal RNA small subunit methyltransferase G.